Here is a 150-residue protein sequence, read N- to C-terminus: MSDSVELFTDGACKGNPGPGGWGALLVCKGVEKELWGGEANTTNNRMELTGAIRGLEELKRPCEVTLVTDSQYVMKGITEWMVNWKKRGWKTAAKEPVKNADLWQLLDEQVSRHTVKWQWVRGHIGHPGNERADQLANRGVDEVRGIKRA.

Residues 1–142 form the RNase H type-1 domain; sequence MSDSVELFTD…ADQLANRGVD (142 aa). Mg(2+)-binding residues include Asp-10, Glu-48, Asp-70, and Asp-134.

It belongs to the RNase H family. Monomer. Requires Mg(2+) as cofactor.

It is found in the cytoplasm. It carries out the reaction Endonucleolytic cleavage to 5'-phosphomonoester.. Its function is as follows. Endonuclease that specifically degrades the RNA of RNA-DNA hybrids. This chain is Ribonuclease HI, found in Pseudomonas syringae pv. tomato (strain ATCC BAA-871 / DC3000).